Reading from the N-terminus, the 918-residue chain is Translation initiation factor IF-2 (918 aa).

Residues 39–321 (DDASEKHLRN…KRDGRMKETT (283 aa)) form a disordered region. Positions 95-146 (KSSNNESTTRNNNNNKNGNQNRNNTNGRPNNNQNRPNNNRNQNNNRNGNRPN) are enriched in low complexity. Positions 148–158 (PKRDEKQDRIR) are enriched in basic and acidic residues. Residues 159-174 (ASVAEAARMAAQANRE) are compositionally biased toward low complexity. The segment covering 180-190 (PQANRQRTNSA) has biased composition (polar residues). Composition is skewed to low complexity over residues 201-231 (NNQN…NNRN), 237-267 (SRPN…TANN), and 278-296 (GRNN…QNRP). Positions 302–313 (RKNKKRNRKAKR) are enriched in basic residues. The tr-type G domain maps to 419–588 (SRPPVVTIMG…LLQAEVLELK (170 aa)). Residues 428–435 (GHVDHGKT) are G1. Position 428–435 (428–435 (GHVDHGKT)) interacts with GTP. The interval 453 to 457 (GITQG) is G2. Residues 474-477 (DTPG) are G3. Residues 474 to 478 (DTPGH) and 528 to 531 (NKID) contribute to the GTP site. Residues 528–531 (NKID) form a G4 region. Positions 564–566 (SAK) are G5.

The protein belongs to the TRAFAC class translation factor GTPase superfamily. Classic translation factor GTPase family. IF-2 subfamily.

It is found in the cytoplasm. Its function is as follows. One of the essential components for the initiation of protein synthesis. Protects formylmethionyl-tRNA from spontaneous hydrolysis and promotes its binding to the 30S ribosomal subunits. Also involved in the hydrolysis of GTP during the formation of the 70S ribosomal complex. This chain is Translation initiation factor IF-2, found in Pediococcus pentosaceus (strain ATCC 25745 / CCUG 21536 / LMG 10740 / 183-1w).